The sequence spans 29 residues: Cytochrome b6-f complex subunit 8 (29 aa).

The chain crosses the membrane as a helical span at residues 3 to 23 (IVSLAWAALMVVFTFSLSLVV).

This sequence belongs to the PetN family. In terms of assembly, the 4 large subunits of the cytochrome b6-f complex are cytochrome b6, subunit IV (17 kDa polypeptide, PetD), cytochrome f and the Rieske protein, while the 4 small subunits are PetG, PetL, PetM and PetN. The complex functions as a dimer.

It localises to the plastid. The protein resides in the chloroplast thylakoid membrane. In terms of biological role, component of the cytochrome b6-f complex, which mediates electron transfer between photosystem II (PSII) and photosystem I (PSI), cyclic electron flow around PSI, and state transitions. This Solanum bulbocastanum (Wild potato) protein is Cytochrome b6-f complex subunit 8.